The following is a 334-amino-acid chain: Aspartate carbamoyltransferase catalytic subunit (334 aa).

Residues arginine 71 and threonine 72 each contribute to the carbamoyl phosphate site. Lysine 99 is a binding site for L-aspartate. Carbamoyl phosphate-binding residues include arginine 121, histidine 151, and glutamine 154. 2 residues coordinate L-aspartate: arginine 184 and arginine 239. Carbamoyl phosphate is bound by residues glycine 280 and proline 281.

It belongs to the aspartate/ornithine carbamoyltransferase superfamily. ATCase family. As to quaternary structure, heterododecamer (2C3:3R2) of six catalytic PyrB chains organized as two trimers (C3), and six regulatory PyrI chains organized as three dimers (R2).

It catalyses the reaction carbamoyl phosphate + L-aspartate = N-carbamoyl-L-aspartate + phosphate + H(+). It participates in pyrimidine metabolism; UMP biosynthesis via de novo pathway; (S)-dihydroorotate from bicarbonate: step 2/3. In terms of biological role, catalyzes the condensation of carbamoyl phosphate and aspartate to form carbamoyl aspartate and inorganic phosphate, the committed step in the de novo pyrimidine nucleotide biosynthesis pathway. In Pseudomonas fluorescens (strain SBW25), this protein is Aspartate carbamoyltransferase catalytic subunit.